Consider the following 447-residue polypeptide: N-succinylarginine dihydrolase (447 aa).

Residues alanine 19–serine 28, asparagine 110, and histidine 137–arginine 138 contribute to the substrate site. Glutamate 174 is a catalytic residue. Arginine 212 contacts substrate. The active site involves histidine 248. Residues aspartate 250 and asparagine 359 each coordinate substrate. Cysteine 365 (nucleophile) is an active-site residue.

This sequence belongs to the succinylarginine dihydrolase family. Homodimer.

It catalyses the reaction N(2)-succinyl-L-arginine + 2 H2O + 2 H(+) = N(2)-succinyl-L-ornithine + 2 NH4(+) + CO2. The protein operates within amino-acid degradation; L-arginine degradation via AST pathway; L-glutamate and succinate from L-arginine: step 2/5. Functionally, catalyzes the hydrolysis of N(2)-succinylarginine into N(2)-succinylornithine, ammonia and CO(2). This chain is N-succinylarginine dihydrolase, found in Salmonella heidelberg (strain SL476).